Reading from the N-terminus, the 451-residue chain is Serine--tRNA ligase, cytoplasmic (451 aa).

Cysteine 213 and cysteine 244 form a disulfide bridge. An L-serine-binding site is contributed by 238–240 (TAE). ATP is bound by residues 269 to 271 (RKE) and valine 285. Glutamate 292 serves as a coordination point for L-serine. Position 358–361 (358–361 (ELVS)) interacts with ATP. Threonine 396 contacts L-serine.

This sequence belongs to the class-II aminoacyl-tRNA synthetase family. Type-1 seryl-tRNA synthetase subfamily. As to quaternary structure, homodimer. The tRNA molecule binds across the dimer.

The protein resides in the cytoplasm. The protein localises to the cytosol. It carries out the reaction tRNA(Ser) + L-serine + ATP = L-seryl-tRNA(Ser) + AMP + diphosphate + H(+). Functionally, catalyzes the attachment of serine to tRNA(Ser) in a two-step reaction: serine is first activated by ATP to form Ser-AMP and then transferred to the acceptor end of tRNA(Ser). The protein is Serine--tRNA ligase, cytoplasmic of Arabidopsis thaliana (Mouse-ear cress).